Here is a 561-residue protein sequence, read N- to C-terminus: Methionine--tRNA ligase (561 aa).

The 'HIGH' region motif lies at 11 to 21 (PYVNTVPHLGN). Positions 143, 146, 156, and 159 each coordinate Zn(2+). Lysine 334 is a binding site for ATP.

This sequence belongs to the class-I aminoacyl-tRNA synthetase family. MetG type 1 subfamily. The cofactor is Zn(2+).

It localises to the cytoplasm. It catalyses the reaction tRNA(Met) + L-methionine + ATP = L-methionyl-tRNA(Met) + AMP + diphosphate. Is required not only for elongation of protein synthesis but also for the initiation of all mRNA translation through initiator tRNA(fMet) aminoacylation. This chain is Methionine--tRNA ligase, found in Ignicoccus hospitalis (strain KIN4/I / DSM 18386 / JCM 14125).